Consider the following 166-residue polypeptide: Regulatory protein RecX (166 aa).

The protein belongs to the RecX family.

It localises to the cytoplasm. In terms of biological role, modulates RecA activity. This Escherichia coli (strain SMS-3-5 / SECEC) protein is Regulatory protein RecX.